The following is a 969-amino-acid chain: RNA polymerase-associated protein RapA (969 aa).

Positions 164–334 (EVGRRHAPRV…FARLRLLDSD (171 aa)) constitute a Helicase ATP-binding domain. Position 177–184 (177–184 (DEVGLGKT)) interacts with ATP. The DEAH box signature appears at 280 to 283 (DEAH). One can recognise a Helicase C-terminal domain in the interval 492-668 (RVNWLLEKLK…GSNEALNDVI (177 aa)).

The protein belongs to the SNF2/RAD54 helicase family. RapA subfamily. In terms of assembly, interacts with the RNAP. Has a higher affinity for the core RNAP than for the holoenzyme. Its ATPase activity is stimulated by binding to RNAP.

In terms of biological role, transcription regulator that activates transcription by stimulating RNA polymerase (RNAP) recycling in case of stress conditions such as supercoiled DNA or high salt concentrations. Probably acts by releasing the RNAP, when it is trapped or immobilized on tightly supercoiled DNA. Does not activate transcription on linear DNA. Probably not involved in DNA repair. The sequence is that of RNA polymerase-associated protein RapA from Vibrio vulnificus (strain YJ016).